The chain runs to 288 residues: Pyridoxal kinase PdxY (288 aa).

Substrate-binding positions include S9 and 44 to 45 (TQ). 3 residues coordinate ATP: D111, E148, and K181. D224 is a substrate binding site.

It belongs to the pyridoxine kinase family. PdxY subfamily. Homodimer. Mg(2+) serves as cofactor.

The catalysed reaction is pyridoxal + ATP = pyridoxal 5'-phosphate + ADP + H(+). It functions in the pathway cofactor metabolism; pyridoxal 5'-phosphate salvage; pyridoxal 5'-phosphate from pyridoxal: step 1/1. In terms of biological role, pyridoxal kinase involved in the salvage pathway of pyridoxal 5'-phosphate (PLP). Catalyzes the phosphorylation of pyridoxal to PLP. The protein is Pyridoxal kinase PdxY of Haemophilus influenzae (strain PittEE).